The following is a 377-amino-acid chain: Succinyl-diaminopimelate desuccinylase (377 aa).

Position 66 (His-66) interacts with Zn(2+). Asp-68 is an active-site residue. Asp-99 is a Zn(2+) binding site. Glu-133 functions as the Proton acceptor in the catalytic mechanism. Residues Glu-134, Glu-163, and His-349 each contribute to the Zn(2+) site.

Belongs to the peptidase M20A family. DapE subfamily. In terms of assembly, homodimer. It depends on Zn(2+) as a cofactor. Requires Co(2+) as cofactor.

It carries out the reaction N-succinyl-(2S,6S)-2,6-diaminopimelate + H2O = (2S,6S)-2,6-diaminopimelate + succinate. The protein operates within amino-acid biosynthesis; L-lysine biosynthesis via DAP pathway; LL-2,6-diaminopimelate from (S)-tetrahydrodipicolinate (succinylase route): step 3/3. Functionally, catalyzes the hydrolysis of N-succinyl-L,L-diaminopimelic acid (SDAP), forming succinate and LL-2,6-diaminopimelate (DAP), an intermediate involved in the bacterial biosynthesis of lysine and meso-diaminopimelic acid, an essential component of bacterial cell walls. In Legionella pneumophila (strain Corby), this protein is Succinyl-diaminopimelate desuccinylase.